Reading from the N-terminus, the 459-residue chain is N(6)-adenosine-methyltransferase non-catalytic subunit METTL14 (459 aa).

A disordered region spans residues 50–73 (TCRASYDTSAPNAKRKYPDEGEAD). Interaction with METTL3 stretches follow at residues 135–136 (RD) and 237–238 (SG). The interval 245–254 (RVCLRKWGYR) is positively charged region required for RNA-binding. Interaction with METTL3 stretches follow at residues 255–258 (RCED) and 278–287 (KAVFQRTKEH). Positions 297 to 298 (RR) are positively charged region required for RNA-binding. The interval 308 to 312 (NVDID) is interaction with METTL3. A disordered region spans residues 392–459 (IERLRPKSPP…GTHRGGFPTR (68 aa)). Residues 409 to 423 (GGGAPRGGGRGGTSA) are compositionally biased toward gly residues. The segment covering 425-443 (RGERGRERNRTNFRGERGG) has biased composition (basic and acidic residues). The span at 444–453 (FRGGRGGTHR) shows a compositional bias: gly residues.

It belongs to the MT-A70-like family. As to quaternary structure, heterodimer; heterodimerizes with METTL3 to form an antiparallel heterodimer that constitutes an active methyltransferase. Component of the WMM complex, a N6-methyltransferase complex composed of a catalytic subcomplex, named MAC, and of an associated subcomplex, named MACOM. The MAC subcomplex is composed of METTL3 and METTL14.

It localises to the nucleus. The METTL3-METTL14 heterodimer forms a N6-methyltransferase complex that methylates adenosine residues at the N(6) position of some mRNAs and regulates the circadian clock, differentiation of embryonic stem cells and cortical neurogenesis. In the heterodimer formed with METTL3, METTL14 constitutes the RNA-binding scaffold that recognizes the substrate rather than the catalytic core. N6-methyladenosine (m6A), which takes place at the 5'-[AG]GAC-3' consensus sites of some mRNAs, plays a role in mRNA stability and processing. The polypeptide is N(6)-adenosine-methyltransferase non-catalytic subunit METTL14 (METTL14) (Gallus gallus (Chicken)).